The primary structure comprises 459 residues: XK-related protein 3 (459 aa).

10 consecutive transmembrane segments (helical) span residues 35–55 (FSIIFSTVLYCGEVAFGLYMF), 68–88 (SFTISFIIVGAILDQIILMFF), 97–117 (AALLFWHILLLGPIVRCLHTI), 169–189 (IQAFLGSVPQLILQMYISLTI), 199–219 (LMTFSLLSVTYGAIRCNILAI), 238–258 (VVMWRFLEVISRVVTLAFFIA), 264–284 (SLPVLLIIYFVSLLAPWLEFW), 300–320 (MVGTVLMLFLITLLYAAINFS), 345–365 (ILHYSFQFLENVIMILVFRFF), and 377–397 (LIAVQLIISYLLATGFMLLFY).

This sequence belongs to the XK family. Expressed predominantly, if not exclusively, in testis.

It is found in the cell membrane. The sequence is that of XK-related protein 3 (XKR3) from Homo sapiens (Human).